The primary structure comprises 369 residues: Aminomethyltransferase (369 aa).

This sequence belongs to the GcvT family. The glycine cleavage system is composed of four proteins: P, T, L and H.

It carries out the reaction N(6)-[(R)-S(8)-aminomethyldihydrolipoyl]-L-lysyl-[protein] + (6S)-5,6,7,8-tetrahydrofolate = N(6)-[(R)-dihydrolipoyl]-L-lysyl-[protein] + (6R)-5,10-methylene-5,6,7,8-tetrahydrofolate + NH4(+). Its function is as follows. The glycine cleavage system catalyzes the degradation of glycine. This Xanthomonas oryzae pv. oryzae (strain PXO99A) protein is Aminomethyltransferase.